The chain runs to 209 residues: Probable GTP-binding protein EngB (209 aa).

In terms of domain architecture, EngB-type G spans 22–198 (TPLEIAFVGR…NRTVGSWLDA (177 aa)). Ser37 and Thr59 together coordinate Mg(2+).

Belongs to the TRAFAC class TrmE-Era-EngA-EngB-Septin-like GTPase superfamily. EngB GTPase family. Requires Mg(2+) as cofactor.

Its function is as follows. Necessary for normal cell division and for the maintenance of normal septation. The sequence is that of Probable GTP-binding protein EngB from Neisseria meningitidis serogroup B (strain ATCC BAA-335 / MC58).